The chain runs to 81 residues: Cytotoxin 1a (81 aa).

Positions 1–21 (MKTLLLTLVVVTIVCLDLGYT) are cleaved as a signal peptide. Disulfide bonds link Cys24-Cys42, Cys35-Cys59, Cys63-Cys74, and Cys75-Cys80.

It belongs to the three-finger toxin family. Short-chain subfamily. Type IA cytotoxin sub-subfamily. Monomer in solution; Homodimer and oligomer in the presence of negatively charged lipids forming a pore with a size ranging between 20 and 30 Angstroms. Expressed by the venom gland.

The protein localises to the secreted. The protein resides in the target cell membrane. Functionally, shows cytolytic activity on many different cells by forming pore in lipid membranes. In vivo, increases heart rate or kills the animal by cardiac arrest. In addition, it binds to heparin with high affinity, interacts with Kv channel-interacting protein 1 (KCNIP1) in a calcium-independent manner, and binds to integrin alpha-V/beta-3 (ITGAV/ITGB3) with moderate affinity. The chain is Cytotoxin 1a from Naja atra (Chinese cobra).